The primary structure comprises 96 residues: MKFSLISVFLFAVFLSNENIFQAIADNRYLPTIFKNPVNAEQRSEAVMSSSLTNEEESRNWPHRATRNTLEKGQKRSPAARSEIEEMEEYDDRWMW.

The signal sequence occupies residues Met-1–Ala-25. The disordered stretch occupies residues Glu-45–Ile-84.

Belongs to the non-disulfide-bridged peptide (NDBP) superfamily. Expressed by the venom gland.

The protein resides in the secreted. This Lychas mucronatus (Chinese swimming scorpion) protein is Venom protein 3.1.